A 181-amino-acid polypeptide reads, in one-letter code: MSSLSVFHVSSPDTPNKVLTHLEDIASTLGEHGVAFDRWEAAAPITPGASQEEVISAYRTQIDKLMTEHGYVTVDVISLNSDHPQKAELRAKFLEEHRHGEDEVRFFVAGRGLFTLHIDDYVYAVMCEKNDLISVPAGTRHWFDMGENPHFVAIRLFNNPEGWVANFTGEDIAGRFPRLED.

Fe(2+) contacts are provided by His-97, His-99, Glu-103, and His-141. Ni(2+)-binding residues include His-97, His-99, Glu-103, and His-141.

The protein belongs to the acireductone dioxygenase (ARD) family. Monomer. The cofactor is Fe(2+). Ni(2+) serves as cofactor.

The catalysed reaction is 1,2-dihydroxy-5-(methylsulfanyl)pent-1-en-3-one + O2 = 3-(methylsulfanyl)propanoate + CO + formate + 2 H(+). The enzyme catalyses 1,2-dihydroxy-5-(methylsulfanyl)pent-1-en-3-one + O2 = 4-methylsulfanyl-2-oxobutanoate + formate + 2 H(+). It participates in amino-acid biosynthesis; L-methionine biosynthesis via salvage pathway; L-methionine from S-methyl-5-thio-alpha-D-ribose 1-phosphate: step 5/6. In terms of biological role, catalyzes 2 different reactions between oxygen and the acireductone 1,2-dihydroxy-3-keto-5-methylthiopentene (DHK-MTPene) depending upon the metal bound in the active site. Fe-containing acireductone dioxygenase (Fe-ARD) produces formate and 2-keto-4-methylthiobutyrate (KMTB), the alpha-ketoacid precursor of methionine in the methionine recycle pathway. Ni-containing acireductone dioxygenase (Ni-ARD) produces methylthiopropionate, carbon monoxide and formate, and does not lie on the methionine recycle pathway. The sequence is that of Acireductone dioxygenase from Pseudomonas savastanoi pv. phaseolicola (strain 1448A / Race 6) (Pseudomonas syringae pv. phaseolicola (strain 1448A / Race 6)).